The following is a 706-amino-acid chain: uncharacterized protein (706 aa).

This is an uncharacterized protein from Rickettsia prowazekii (strain Madrid E).